Consider the following 920-residue polypeptide: Chitin synthase C (920 aa).

2 disordered regions span residues 1–41 and 140–173; these read MSYN…NAYQ and IPML…SPAP. Residues 154 to 163 are compositionally biased toward acidic residues; the sequence is YSDEYQVEEQ. The next 5 membrane-spanning stretches (helical) occupy residues 466–486, 564–584, 608–628, 640–660, and 675–695; these read SAFG…FVAL, RWLN…YQIW, LFAW…TTYL, VLGV…FVLA, and MVYF…FVTV. N-linked (GlcNAc...) asparagine glycosylation occurs at N715. 4 helical membrane-spanning segments follow: residues 718 to 738, 749 to 769, 847 to 867, and 892 to 912; these read FFTI…ASII, FIQY…YAFC, AVVL…LSAA, and VVLW…LWYL.

The protein belongs to the chitin synthase family. Class I subfamily.

The protein localises to the cell membrane. The catalysed reaction is [(1-&gt;4)-N-acetyl-beta-D-glucosaminyl](n) + UDP-N-acetyl-alpha-D-glucosamine = [(1-&gt;4)-N-acetyl-beta-D-glucosaminyl](n+1) + UDP + H(+). Functionally, polymerizes chitin, a structural polymer of the cell wall and septum, by transferring the sugar moiety of UDP-GlcNAc to the non-reducing end of the growing chitin polymer. Involved in hyphal growth. The sequence is that of Chitin synthase C from Aspergillus oryzae (strain ATCC 42149 / RIB 40) (Yellow koji mold).